A 225-amino-acid chain; its full sequence is uncharacterized protein (225 aa).

The PCI domain maps to 166–214 (LNSDVIKDKILAIIENVGEITYEELAEKINIPEEDLEKYLSELKESGDI).

This is an uncharacterized protein from Methanocaldococcus jannaschii (strain ATCC 43067 / DSM 2661 / JAL-1 / JCM 10045 / NBRC 100440) (Methanococcus jannaschii).